The chain runs to 431 residues: MLQQILQDMYIDPELLAELSDVQKHILFYKMREEQLRRWREREAWDALAQAEGLRPAKVKRASNKHLQWLLGADGEVWVWVMGEGPGDKPYEEISEELIAERARLQAQKEAEELWRQKEAEITKKFRDALANEKARILAEKWKVEMEDRKAAKILEERIHEEFKRKEEEERRRGEEQIRLQEEQRAKELYWTLKQAQLHSQASENEEREWEEQLRRSKAADEERSRRAQRARDEYRRHSLRAIQKGTVAGLSTMFQELGQNHEQEARLYHQLPDTSPPSPLTGPDRTWERPLRPLSREVIVRWFKEEQLPRRAGFERNTKSIAPWFHGIISRESAEDLLENMTEGAFLVRVSEKIWGYTLSYRLQRGFKHFLVDASGDFYSFLGVDPNRHATLTDLIDFHKEEIITVSGGELLQEPCGQRDSPPDYHLLFE.

The disordered stretch occupies residues 201-235 (QASENEEREWEEQLRRSKAADEERSRRAQRARDEY). Basic and acidic residues predominate over residues 211–235 (EEQLRRSKAADEERSRRAQRARDEY). Residues 325-417 (WFHGIISRES…SGGELLQEPC (93 aa)) enclose the SH2 domain.

In Mus musculus (Mouse), this protein is SH2 domain-containing protein 4B (Sh2d4b).